A 399-amino-acid polypeptide reads, in one-letter code: Glucose-1-phosphate adenylyltransferase (399 aa).

Residues glycine 158, 174-175 (EK), and serine 192 each bind alpha-D-glucose 1-phosphate.

It belongs to the bacterial/plant glucose-1-phosphate adenylyltransferase family. Homotetramer.

The enzyme catalyses alpha-D-glucose 1-phosphate + ATP + H(+) = ADP-alpha-D-glucose + diphosphate. The protein operates within glycan biosynthesis; glycogen biosynthesis. In terms of biological role, involved in the biosynthesis of ADP-glucose, a building block required for the elongation reactions to produce glycogen. Catalyzes the reaction between ATP and alpha-D-glucose 1-phosphate (G1P) to produce pyrophosphate and ADP-Glc. The chain is Glucose-1-phosphate adenylyltransferase from Streptomyces coelicolor (strain ATCC BAA-471 / A3(2) / M145).